Reading from the N-terminus, the 499-residue chain is Putative hydrolase YuaR (499 aa).

A signal peptide spans 1 to 26; the sequence is MRVIMKPLRRTLVFFIFSVFLCGTVS. The region spanning 94 to 393 is the AB hydrolase-1 domain; that stretch reads GSVIIISGGP…DAFPAVNFER (300 aa). Ser207 (nucleophile) is an active-site residue. Residue Asp433 is part of the active site. Catalysis depends on His460, which acts as the Proton donor.

It belongs to the peptidase S33 family.

The sequence is that of Putative hydrolase YuaR (yuaR) from Escherichia coli (strain K12).